The following is a 681-amino-acid chain: PTS system glucose-specific EIICBA component (681 aa).

The PTS EIIC type-1 domain maps to 3 to 414 (KKLFGQLQRI…LKYKTPGRED (412 aa)). 10 consecutive transmembrane segments (helical) span residues 16–36 (LMLPVAILPAAGLLLAIGTAM), 73–93 (MIFALGVAIGLAGGDGVAAIA), 126–146 (ILGIPTLQTGVFGGIIIGALA), 170–190 (FVPIMMATTSFILAFPMALIW), 199–219 (AFSTGLLDSNTGVAVFLFGFI), 273–293 (FMQGEFPVMMFGLPAAALAIY), 303–323 (VVAGLMGSAALTSFLTGITEP), 328–348 (FLFVAPLLFFIHAVLDGLSFL), 355–375 (LHLGYTFSGGFIDYFLLGILP), and 383–403 (VIPVGLVYAVIYYFVFRFLIV). Residues 425 to 506 (TELPYAVLEA…QQIMNGQVVE (82 aa)) enclose the PTS EIIB type-1 domain. C447 serves as the catalytic Phosphocysteine intermediate; for EIIB activity. The PTS EIIA type-1 domain maps to 551 to 655 (DQVFSEKMMG…SDITPIIVTQ (105 aa)). H603 serves as the catalytic Tele-phosphohistidine intermediate; for EIIA activity.

The protein resides in the cell membrane. The enzyme catalyses N(pros)-phospho-L-histidyl-[protein] + D-glucose(out) = D-glucose 6-phosphate(in) + L-histidyl-[protein]. Functionally, the phosphoenolpyruvate-dependent sugar phosphotransferase system (sugar PTS), a major carbohydrate active transport system, catalyzes the phosphorylation of incoming sugar substrates concomitantly with their translocation across the cell membrane. This system is involved in glucose transport. The polypeptide is PTS system glucose-specific EIICBA component (ptsG) (Staphylococcus aureus (strain MRSA252)).